The primary structure comprises 358 residues: 4-hydroxy-2-oxovalerate aldolase 2 (358 aa).

The 253-residue stretch at 16 to 268 folds into the Pyruvate carboxyltransferase domain; it reads VLLHDMCLRD…ETGVDLFKLM (253 aa). Position 24-25 (24-25) interacts with substrate; sequence RD. D25 is a binding site for Mn(2+). H28 acts as the Proton acceptor in catalysis. The substrate site is built by S178 and H207. Positions 207 and 209 each coordinate Mn(2+). Residue Y298 participates in substrate binding.

Belongs to the 4-hydroxy-2-oxovalerate aldolase family.

The catalysed reaction is (S)-4-hydroxy-2-oxopentanoate = acetaldehyde + pyruvate. This Methylibium petroleiphilum (strain ATCC BAA-1232 / LMG 22953 / PM1) protein is 4-hydroxy-2-oxovalerate aldolase 2.